A 1499-amino-acid chain; its full sequence is Condensin complex subunit 1 (1499 aa).

2 disordered regions span residues 1–43 and 1421–1499; these read MPRK…DGLS and ITKN…MLDD. The segment covering 1432 to 1446 has biased composition (low complexity); the sequence is PTTMSGSSRTTSRAA. 2 stretches are compositionally biased toward acidic residues: residues 1458–1467 and 1486–1499; these read SDEDDSDSDD and ADDDSDSDEFMLDD.

Belongs to the CND1 (condensin subunit 1) family. In terms of assembly, component of the condensin I complex, which contains the mix-1/SMC2 and smc-4/SMC4 heterodimer, and three non SMC subunits that probably regulate the complex: dpy-26, capg-1 and dpy-28. Within the complex, interacts with dpy-26 and smc-4. Component of the dosage compensation complex, which consist of the condensin I like components mix-1/SMC2 and dpy-27/SMC4, and the three non SMC subunits dpy-26, capg-1 and dpy-28. Within the complex, interacts with mix-1, dpy-27, dpy-26 and capg-1. Interacts with smcl-1. Post-translationally, sumoylated. Sumoylated in the context of the dosage compensation complex but not in the condensin I complex. Sumoylation is important for assembly of the dosage compensation complex and its robust binding to the X chromosome. In terms of tissue distribution, expressed in somatic and germline tissues (at protein level).

It is found in the nucleus. The protein localises to the chromosome. Required for both chromosome condensation and segregation during mitosis and meiosis and X-chromosome dosage compensation depending on its binding partners. Regulatory subunit of the condensin I complex, a complex required for conversion of interphase chromatin into mitotic-like condense chromosomes. The condensin I complex probably introduces positive supercoils into relaxed DNA in the presence of type I topoisomerases and converts nicked DNA into positive knotted forms in the presence of type II topoisomerases. The condensin I complex function is required for proper chromosome segregation in mitosis and meiosis. As a member of the condensin I complex, further controls the crossover number and distribution in meiosis by restricting double strand break formation, possibly by influencing higher-order chromosome structure. Plays a role in robust cytokinesis upon presence of chromatin obstructions. Also a member of the condensin I-like dosage compensation complex that associates specifically with hermaphrodite X chromosomes to reduce their gene transcription during interphase, possibly through chromatin reorganization. The chain is Condensin complex subunit 1 from Caenorhabditis elegans.